Reading from the N-terminus, the 316-residue chain is Golgi to ER traffic protein 2 (316 aa).

The disordered stretch occupies residues 1–75 (MATELSDAEK…SDEEVEKSTK (75 aa)). Over 1 to 167 (MATELSDAEK…LKYYKFKVSK (167 aa)) the chain is Cytoplasmic. The segment covering 7 to 19 (DAEKRKLLRERRQ) has biased composition (basic and acidic residues). Composition is skewed to polar residues over residues 22–48 (FSNG…STSV) and 56–65 (PSGNKKSSNV). The chain crosses the membrane as a helical span at residues 168–187 (LKSYIILIKWALLAPYVYFI). Residues 188–209 (MHPNPTVLQASNLLSQIVERSN) are Lumenal-facing. Residues 210-229 (FFSIFTGLEIVFISIYYQML) traverse the membrane as a helical segment. Over 230 to 276 (KKLQRDNNVTATQNAGGILKYLTMIPEGILPIRNIQGKIGLALEYFD) the chain is Cytoplasmic. A helical transmembrane segment spans residues 277–297 (VASMYVTDICFVLVLFGVMKY). Over 298–316 (YHSSFPISVPIEPPIAGIQ) the chain is Lumenal.

This sequence belongs to the GET2 family. As to quaternary structure, component of the Golgi to ER traffic (GET) complex, which is composed of GET1, GET2 and GET3. Within the complex, GET1 and GET2 form a heterotetramer which is stabilized by phosphatidylinositol binding and which binds to the GET3 homodimer.

The protein localises to the endoplasmic reticulum membrane. It is found in the golgi apparatus membrane. Required for the post-translational delivery of tail-anchored (TA) proteins to the endoplasmic reticulum. Together with GET1, acts as a membrane receptor for soluble GET3, which recognizes and selectively binds the transmembrane domain of TA proteins in the cytosol. The GET complex cooperates with the HDEL receptor ERD2 to mediate the ATP-dependent retrieval of resident ER proteins that contain a C-terminal H-D-E-L retention signal from the Golgi to the ER. The polypeptide is Golgi to ER traffic protein 2 (Kluyveromyces lactis (strain ATCC 8585 / CBS 2359 / DSM 70799 / NBRC 1267 / NRRL Y-1140 / WM37) (Yeast)).